Here is a 157-residue protein sequence, read N- to C-terminus: MGDLEGQDRPDPISTMVGPSGTGNLRLTSFQQVRRSILSQERRNPAPLATCTKKKLGRKEEPLLIPATINNYRRAIHLKNGARISLDVGLYFFRRARFGTLKQDMIYIIRHHRRLEIKVRFIALLIQACCRIVGYDYLFFYEVRNHLLLAALLIIIR.

Basic and acidic residues predominate over residues 1–11; that stretch reads MGDLEGQDRPD. The tract at residues 1 to 22 is disordered; that stretch reads MGDLEGQDRPDPISTMVGPSGT.

Its subcellular location is the mitochondrion. This is an uncharacterized protein from Arabidopsis thaliana (Mouse-ear cress).